Reading from the N-terminus, the 257-residue chain is Thioesterase frbE (257 aa).

Belongs to the AMT4 thioesterase family.

Its pathway is antifungal biosynthesis. In terms of biological role, thioesterase; part of the gene cluster that mediates the biosynthesis of the antifungal antibiotic FR901469, an inhibitor of beta-1,3-glucansynthase, exerting antifungal activity against the pathogenes Candida albicans and Aspergillus fumigatus. FR901469 is a cyclic depsipeptide containing 12 amino acid residues and a fatty acid chain. The NRPS frbI contains 12 modules responsible for the formation of the depsipeptide backbone which is denoted as Acyl-Thr-Ala-Tyr-Val-4OHPro-Thr-Thr-3OHPro-threo3OHGln-Gly-Thr-Orn-OH (C71H116N14O23). The PKS frbB is probably involved in the production of the hydrocarbon chain, and the acyl-CoA ligase frbC might be involved in the transport of the chain to the peptide ptoduct of frbI. Because FR901469 contains 3 hydroxylated amino acid residues, the 3 oxygenases frbA, frbH, and frbJ might be participating in amino acid hydroxylation. As no thioesterase domains were detected in frbI or frbB, the thioesterases frbD and frbE may instead release and cyclize the products of the NRPS and PKS, respectively. This chain is Thioesterase frbE, found in Dothideomycetidae sp. (strain 11243) (Fungal sp. (strain No.11243)).